We begin with the raw amino-acid sequence, 124 residues long: Fluoride-specific ion channel FluC (124 aa).

4 helical membrane-spanning segments follow: residues 5–25, 32–52, 61–81, and 94–114; these read LLVS…AVWF, FAFG…ITLG, LLFV…SAEV, and LAVI…GILV. Na(+)-binding residues include Gly-69 and Thr-72.

This sequence belongs to the fluoride channel Fluc/FEX (TC 1.A.43) family.

Its subcellular location is the cell inner membrane. The catalysed reaction is fluoride(in) = fluoride(out). Its activity is regulated as follows. Na(+) is not transported, but it plays an essential structural role and its presence is essential for fluoride channel function. In terms of biological role, fluoride-specific ion channel. Important for reducing fluoride concentration in the cell, thus reducing its toxicity. The sequence is that of Fluoride-specific ion channel FluC from Haemophilus ducreyi (strain 35000HP / ATCC 700724).